Consider the following 1894-residue polypeptide: 1,3-beta-glucan synthase component bgs2 (1894 aa).

Disordered regions lie at residues 1–53 (MSWH…DSNK) and 282–310 (GPKI…PETS). Residues 32–51 (EFNNPGEESTYPQANSWNDS) are compositionally biased toward polar residues. Residues 286-296 (KQAKKKQKRKS) show a composition bias toward basic residues. 16 helical membrane-spanning segments follow: residues 530–550 (VSLG…FEWI), 566–586 (FLIL…VFGF), 600–620 (VAIV…LVPL), 655–675 (VSWG…YFFL), 710–730 (ILLG…TYLW), 731–751 (YILV…ISIW), 1338–1358 (IFIM…GGMY), 1394–1414 (CIIS…VQEL), 1476–1498 (LLFS…MLLF), 1503–1525 (VWIP…PFIF), 1598–1618 (FTEI…YFFI), 1637–1657 (ILIL…TFAG), 1673–1693 (FGAV…IIVF), 1697–1717 (WYLE…IIAI), 1778–1798 (DFFL…IPFI), and 1837–1857 (TMFF…LVVA).

Belongs to the glycosyltransferase 48 family. As to quaternary structure, component of the 1,3-beta-glucan synthase (GS) complex, composed of at least the alternate catalytic subunits bgs1, bgs2, bgs3, and bgs4, and a regulatory subunit chr4.

The protein resides in the prospore membrane. The catalysed reaction is [(1-&gt;3)-beta-D-glucosyl](n) + UDP-alpha-D-glucose = [(1-&gt;3)-beta-D-glucosyl](n+1) + UDP + H(+). Its function is as follows. Alternate catalytic subunit of the 1,3-beta-glucan synthase (GS) complex. Synthesizes 1,3-beta-glucan, a major structural component of the yeast cell wall. Has a role in ascospore development where it is required for the assembly of a functional spore wall. This chain is 1,3-beta-glucan synthase component bgs2, found in Schizosaccharomyces pombe (strain 972 / ATCC 24843) (Fission yeast).